Here is a 424-residue protein sequence, read N- to C-terminus: Riboflavin biosynthesis protein RibBA (424 aa).

The segment at 1-206 is DHBP synthase; the sequence is MVTCEAGIAS…VDDLITYRWT (206 aa). D-ribulose 5-phosphate is bound by residues 32–33, aspartate 37, 145–149, and glutamate 169; these read RE and RPGHT. A Mg(2+)-binding site is contributed by glutamate 33. Residue histidine 148 coordinates Mg(2+). Positions 207-424 are GTP cyclohydrolase II; sequence FDSLVEHVSS…YETVERTSCC (218 aa). A GTP-binding site is contributed by 257–261; the sequence is RVHSE. Cysteine 262, cysteine 273, and cysteine 275 together coordinate Zn(2+). GTP is bound by residues glutamine 278, 301–303, and threonine 323; that span reads EGR. Aspartate 335 (proton acceptor; for GTP cyclohydrolase activity) is an active-site residue. The Nucleophile; for GTP cyclohydrolase activity role is filled by arginine 337. Threonine 358 and lysine 363 together coordinate GTP.

The protein in the N-terminal section; belongs to the DHBP synthase family. It in the C-terminal section; belongs to the GTP cyclohydrolase II family. The cofactor is Mg(2+). Requires Mn(2+) as cofactor. It depends on Zn(2+) as a cofactor.

It catalyses the reaction D-ribulose 5-phosphate = (2S)-2-hydroxy-3-oxobutyl phosphate + formate + H(+). The enzyme catalyses GTP + 4 H2O = 2,5-diamino-6-hydroxy-4-(5-phosphoribosylamino)-pyrimidine + formate + 2 phosphate + 3 H(+). It participates in cofactor biosynthesis; riboflavin biosynthesis; 2-hydroxy-3-oxobutyl phosphate from D-ribulose 5-phosphate: step 1/1. It functions in the pathway cofactor biosynthesis; riboflavin biosynthesis; 5-amino-6-(D-ribitylamino)uracil from GTP: step 1/4. Its function is as follows. Catalyzes the conversion of D-ribulose 5-phosphate to formate and 3,4-dihydroxy-2-butanone 4-phosphate. Catalyzes the conversion of GTP to 2,5-diamino-6-ribosylamino-4(3H)-pyrimidinone 5'-phosphate (DARP), formate and pyrophosphate. This is Riboflavin biosynthesis protein RibBA from Chlamydia muridarum (strain MoPn / Nigg).